A 269-amino-acid polypeptide reads, in one-letter code: Hydroxyethylthiazole kinase (269 aa).

Met-45 is a substrate binding site. ATP-binding residues include Arg-121 and Thr-167. Gly-194 lines the substrate pocket.

This sequence belongs to the Thz kinase family. The cofactor is Mg(2+).

It catalyses the reaction 5-(2-hydroxyethyl)-4-methylthiazole + ATP = 4-methyl-5-(2-phosphooxyethyl)-thiazole + ADP + H(+). The protein operates within cofactor biosynthesis; thiamine diphosphate biosynthesis; 4-methyl-5-(2-phosphoethyl)-thiazole from 5-(2-hydroxyethyl)-4-methylthiazole: step 1/1. In terms of biological role, catalyzes the phosphorylation of the hydroxyl group of 4-methyl-5-beta-hydroxyethylthiazole (THZ). The protein is Hydroxyethylthiazole kinase of Bacillus mycoides (strain KBAB4) (Bacillus weihenstephanensis).